Reading from the N-terminus, the 865-residue chain is Envelope glycoprotein gp160 (865 aa).

The first 20 residues, 1–20 (MRYTIITLGIIVIGIGIVLS), serve as a signal peptide directing secretion. The Extracellular segment spans residues 21 to 705 (KQWITVFYGI…SKWLNILKMG (685 aa)). Asn35 is a glycosylation site (N-linked (GlcNAc...) asparagine; by host). Cys42 and Cys55 are oxidised to a cystine. N-linked (GlcNAc...) asparagine; by host glycans are attached at residues Asn68, Asn117, Asn150, Asn165, Asn195, Asn198, Asn210, Asn252, Asn255, Asn266, Asn276, Asn282, Asn294, Asn306, Asn316, Asn373, Asn414, Asn451, Asn488, and Asn491. Intrachain disulfides connect Cys101–Cys218, Cys108–Cys209, Cys113–Cys166, Cys231–Cys261, and Cys241–Cys253. The V1 stretch occupies residues 113 to 165 (CVELNSTRERATTPTTTPKSTGLPCVGPTSGENLQSCNASIIEREMEDEPASN). The tract at residues 166–209 (CTFAMAGYVRDQKKNYYSVVWNDAEIYCKNKTNSTSKECYMIHC) is V2. Residues 311–343 (CRRPGNKTVLPVTIMAGLVFHSQKYNMKLRQAW) are V3. Cys311 and Cys344 form a disulfide bridge. Residues Cys396 and Cys471 are joined by a disulfide bond. Residues 403–444 (CKMDWFLNYLNNKTWDAYHNFCSSKKKGHAPGPCVQRTYVAY) form a V4 region. Positions 487–494 (KNRTNVTL) are V5. The interval 537–557 (VPFVLGFLGFLGAAGTAMGAA) is fusion peptide. An immunosuppression region spans residues 600–616 (LNARVTALEKYLEDQAR). Residues Asn645 and Asn661 are each glycosylated (N-linked (GlcNAc...) asparagine; by host). Positions 650 to 675 (EWERQIADLESNITGQLVKAREQEEK) form a coiled coil. The segment at 682–703 (KLTSWSDFWSWFDFSKWLNILK) is MPER; binding to GalCer. The helical transmembrane segment at 706–726 (FLVIVGIIGLRLLYTVYGCIV) threads the bilayer. At 727–865 (RVRQGYVPLS…VRQGLEEILN (139 aa)) the chain is on the cytoplasmic side. The YXXL motif; contains endocytosis signal motif lies at 732–735 (YVPL). Positions 744–763 (VGKGRPDNADEPGEGGDNSR) are disordered.

As to quaternary structure, the mature envelope protein (Env) consists of a homotrimer of non-covalently associated gp120-gp41 heterodimers. The resulting complex protrudes from the virus surface as a spike. Interacts with host CD4 and CCR5. Gp120 also interacts with the C-type lectins CD209/DC-SIGN and CLEC4M/DC-SIGNR (collectively referred to as DC-SIGN(R)). In terms of assembly, the mature envelope protein (Env) consists of a homotrimer of non-covalently associated gp120-gp41 heterodimers. The resulting complex protrudes from the virus surface as a spike. In terms of processing, specific enzymatic cleavages in vivo yield mature proteins. Envelope glycoproteins are synthesized as an inactive precursor that is heavily N-glycosylated and processed likely by host cell furin in the Golgi to yield the mature SU and TM proteins. The cleavage site between SU and TM requires the minimal sequence [KR]-X-[KR]-R.

It is found in the virion membrane. The protein resides in the host cell membrane. It localises to the host endosome membrane. The surface protein gp120 (SU) attaches the virus to the host lymphoid cell by binding to the primary receptor CD4. This interaction induces a structural rearrangement creating a high affinity binding site for a chemokine coreceptor like CCR5. This peculiar 2 stage receptor-interaction strategy allows gp120 to maintain the highly conserved coreceptor-binding site in a cryptic conformation, protected from neutralizing antibodies. These changes are transmitted to the transmembrane protein gp41 and are thought to activate its fusogenic potential by unmasking its fusion peptide. Its function is as follows. Surface protein gp120 (SU) may target the virus to gut-associated lymphoid tissue (GALT) by binding host ITGA4/ITGB7 (alpha-4/beta-7 integrins), a complex that mediates T-cell migration to the GALT. Interaction between gp120 and ITGA4/ITGB7 would allow the virus to enter GALT early in the infection, infecting and killing most of GALT's resting CD4+ T-cells. This T-cell depletion is believed to be the major insult to the host immune system leading to AIDS. Functionally, the surface protein gp120 is a ligand for CD209/DC-SIGN and CLEC4M/DC-SIGNR, which are respectively found on dendritic cells (DCs), and on endothelial cells of liver sinusoids and lymph node sinuses. These interactions allow capture of viral particles at mucosal surfaces by these cells and subsequent transmission to permissive cells. DCs are professional antigen presenting cells, critical for host immunity by inducing specific immune responses against a broad variety of pathogens. They act as sentinels in various tissues where they take up antigen, process it, and present it to T-cells following migration to lymphoid organs. SIV subverts the migration properties of dendritic cells to gain access to CD4+ T-cells in lymph nodes. Virus transmission to permissive T-cells occurs either in trans (without DCs infection, through viral capture and transmission), or in cis (following DCs productive infection, through the usual CD4-gp120 interaction), thereby inducing a robust infection. In trans infection, bound virions remain infectious over days and it is proposed that they are not degraded, but protected in non-lysosomal acidic organelles within the DCs close to the cell membrane thus contributing to the viral infectious potential during DCs' migration from the periphery to the lymphoid tissues. On arrival at lymphoid tissues, intact virions recycle back to DCs' cell surface allowing virus transmission to CD4+ T-cells. Virion capture also seems to lead to MHC-II-restricted viral antigen presentation, and probably to the activation of SIV-specific CD4+ cells. In terms of biological role, the transmembrane protein gp41 (TM) acts as a class I viral fusion protein. Under the current model, the protein has at least 3 conformational states: pre-fusion native state, pre-hairpin intermediate state, and post-fusion hairpin state. During fusion of viral and target intracellular membranes, the coiled coil regions (heptad repeats) assume a trimer-of-hairpins structure, positioning the fusion peptide in close proximity to the C-terminal region of the ectodomain. The formation of this structure appears to drive apposition and subsequent fusion of viral and target cell membranes. Complete fusion occurs in host cell endosomes. The virus undergoes clathrin-dependent internalization long before endosomal fusion, thus minimizing the surface exposure of conserved viral epitopes during fusion and reducing the efficacy of inhibitors targeting these epitopes. Membranes fusion leads to delivery of the nucleocapsid into the cytoplasm. The envelope glycoprotein gp160 precursor down-modulates cell surface CD4 antigen by interacting with it in the endoplasmic reticulum and blocking its transport to the cell surface. Its function is as follows. The gp120-gp41 heterodimer allows rapid transcytosis of the virus through CD4 negative cells such as simple epithelial monolayers of the intestinal, rectal and endocervical epithelial barriers. Both gp120 and gp41 specifically recognize glycosphingolipids galactosyl-ceramide (GalCer) or 3' sulfo-galactosyl-ceramide (GalS) present in the lipid rafts structures of epithelial cells. Binding to these alternative receptors allows the rapid transcytosis of the virus through the epithelial cells. This transcytotic vesicle-mediated transport of virions from the apical side to the basolateral side of the epithelial cells does not involve infection of the cells themselves. The chain is Envelope glycoprotein gp160 (env) from Simian immunodeficiency virus agm.vervet (isolate AGM TYO-1) (SIV-agm.ver).